A 553-amino-acid chain; its full sequence is Dihydroxy-acid dehydratase (553 aa).

Position 78 (Asp78) interacts with Mg(2+). Cys119 provides a ligand contact to [2Fe-2S] cluster. 2 residues coordinate Mg(2+): Asp120 and Lys121. Lys121 carries the post-translational modification N6-carboxylysine. Position 191 (Cys191) interacts with [2Fe-2S] cluster. Glu444 is a Mg(2+) binding site. Ser470 acts as the Proton acceptor in catalysis.

Belongs to the IlvD/Edd family. In terms of assembly, homodimer. Requires [2Fe-2S] cluster as cofactor. Mg(2+) serves as cofactor.

It catalyses the reaction (2R)-2,3-dihydroxy-3-methylbutanoate = 3-methyl-2-oxobutanoate + H2O. The enzyme catalyses (2R,3R)-2,3-dihydroxy-3-methylpentanoate = (S)-3-methyl-2-oxopentanoate + H2O. Its pathway is amino-acid biosynthesis; L-isoleucine biosynthesis; L-isoleucine from 2-oxobutanoate: step 3/4. The protein operates within amino-acid biosynthesis; L-valine biosynthesis; L-valine from pyruvate: step 3/4. Functions in the biosynthesis of branched-chain amino acids. Catalyzes the dehydration of (2R,3R)-2,3-dihydroxy-3-methylpentanoate (2,3-dihydroxy-3-methylvalerate) into 2-oxo-3-methylpentanoate (2-oxo-3-methylvalerate) and of (2R)-2,3-dihydroxy-3-methylbutanoate (2,3-dihydroxyisovalerate) into 2-oxo-3-methylbutanoate (2-oxoisovalerate), the penultimate precursor to L-isoleucine and L-valine, respectively. The protein is Dihydroxy-acid dehydratase of Methanococcoides burtonii (strain DSM 6242 / NBRC 107633 / OCM 468 / ACE-M).